Consider the following 330-residue polypeptide: Reaction center protein M chain (330 aa).

Transmembrane regions (helical) follow at residues 57 to 83, 115 to 144, and 147 to 172; these read GWTS…AQVG, GGWY…EQHK, and KHIF…ILMG. (7R,8Z)-bacteriochlorophyll b is bound by residues His185 and His205. Residues 202–230 form a helical membrane-spanning segment; that stretch reads NPFHCLSIVFLYGSVLLFCMHGGTILAVT. Positions 222 and 237 each coordinate Fe cation. A ubiquinone is bound at residue Trp255. The helical transmembrane segment at 264-290 threads the bilayer; it reads TMEGIHRWAWWFAVLTPITGGIGILLT. Position 269 (His269) interacts with Fe cation.

The protein belongs to the reaction center PufL/M/PsbA/D family. Reaction center is composed of four bacteriochlorophylls, two bacteriopheophytins, two ubiquinones, one iron, and two highly hydrophobic polypeptide chains (designated L and M).

It is found in the cellular chromatophore membrane. The reaction center is a membrane-bound complex that mediates the initial photochemical event in the electron transfer process of photosynthesis. The sequence is that of Reaction center protein M chain (pufM) from Roseobacter denitrificans (strain ATCC 33942 / OCh 114) (Erythrobacter sp. (strain OCh 114)).